A 486-amino-acid chain; its full sequence is MKEQLIFDLSRSGRKGYSLSPLDIPERPADELLPSKFLRKEPAELPEMAESEVVRHFIRLSNLNYHVDKNMYPLGSCTMKYNPKINDYTCDLPGFASMHPLQPESTSQGALQLMYELAEMLKEIAGMKAVTLQPAAGAHGELTGILLIKKYHEKLGNKRHKLLVVDSAHGTNPASAALGGYECVSVKCDESGCTDMGDLRAKLDGEVAALMLTNPNTVGIFEKQIPEIEKLVHGNGSLLYMDGANMNALLGITRPGDMGFDVMHYNLHKTFSAPHGGGGPGSGPVGVSERLVEFLPVPVIEKFEKDGQTRYRLNSSKPNTIGRMMNFYGNFSVLVRAYTYIRMLGADGLRRVSENAIINANYLLQRLVEHYALPYPRPVMHEFCLSGDRQKKEHGVRTLDIAKRLLDYGYHAPTVYFPLIVSEALMIEPTETEAKETLNAFADAMIAIAEEAKSNPDLIKSAPTTTPVKRLDEAQASRQLNICCQH.

N6-(pyridoxal phosphate)lysine is present on Lys269.

It belongs to the GcvP family. C-terminal subunit subfamily. The glycine cleavage system is composed of four proteins: P, T, L and H. In this organism, the P 'protein' is a heterodimer of two subunits. It depends on pyridoxal 5'-phosphate as a cofactor.

The catalysed reaction is N(6)-[(R)-lipoyl]-L-lysyl-[glycine-cleavage complex H protein] + glycine + H(+) = N(6)-[(R)-S(8)-aminomethyldihydrolipoyl]-L-lysyl-[glycine-cleavage complex H protein] + CO2. Its function is as follows. The glycine cleavage system catalyzes the degradation of glycine. The P protein binds the alpha-amino group of glycine through its pyridoxal phosphate cofactor; CO(2) is released and the remaining methylamine moiety is then transferred to the lipoamide cofactor of the H protein. This is Probable glycine dehydrogenase (decarboxylating) subunit 2 from Chlorobaculum tepidum (strain ATCC 49652 / DSM 12025 / NBRC 103806 / TLS) (Chlorobium tepidum).